The sequence spans 397 residues: L-asparaginase-like protein GD25160 (397 aa).

Positions 1 to 22 (MLAQSCCLRLLILLLLFTSICS) are cleaved as a signal peptide. Disulfide bonds link C90–C95, C189–C205, and C344–C371.

It belongs to the Ntn-hydrolase family.

This Drosophila simulans (Fruit fly) protein is L-asparaginase-like protein GD25160.